The following is a 389-amino-acid chain: Sulfate adenylyltransferase (389 aa).

Belongs to the sulfate adenylyltransferase family.

It carries out the reaction sulfate + ATP + H(+) = adenosine 5'-phosphosulfate + diphosphate. It functions in the pathway sulfur metabolism; hydrogen sulfide biosynthesis; sulfite from sulfate: step 1/3. The chain is Sulfate adenylyltransferase from Deinococcus deserti (strain DSM 17065 / CIP 109153 / LMG 22923 / VCD115).